The following is a 289-amino-acid chain: Glycine--tRNA ligase alpha subunit (289 aa).

This sequence belongs to the class-II aminoacyl-tRNA synthetase family. Tetramer of two alpha and two beta subunits.

It localises to the cytoplasm. It catalyses the reaction tRNA(Gly) + glycine + ATP = glycyl-tRNA(Gly) + AMP + diphosphate. This Nitratidesulfovibrio vulgaris (strain ATCC 29579 / DSM 644 / CCUG 34227 / NCIMB 8303 / VKM B-1760 / Hildenborough) (Desulfovibrio vulgaris) protein is Glycine--tRNA ligase alpha subunit.